The primary structure comprises 132 residues: Small ribosomal subunit protein uS8 (132 aa).

It belongs to the universal ribosomal protein uS8 family. In terms of assembly, part of the 30S ribosomal subunit. Contacts proteins S5 and S12.

Functionally, one of the primary rRNA binding proteins, it binds directly to 16S rRNA central domain where it helps coordinate assembly of the platform of the 30S subunit. The chain is Small ribosomal subunit protein uS8 from Halothermothrix orenii (strain H 168 / OCM 544 / DSM 9562).